A 665-amino-acid chain; its full sequence is Adenylate cyclase 1 (665 aa).

A disordered region spans residues 1 to 25 (MLQRSESGFKDIESMQDSNADKPSR). Over residues 7 to 24 (SGFKDIESMQDSNADKPS) the composition is skewed to basic and acidic residues. 2 consecutive transmembrane segments (helical) span residues 33 to 53 (SLLGLVMVAMLIVVSATLVGL) and 373 to 393 (AVSGAVVVVAVLLALVLAHLI). Residues 394-444 (TKSLNQLTDSANRLQDLDFATPIDVSSHVAEISTLNGAMNRARDAIFTFAL) enclose the HAMP domain. Residues 471–603 (TAMFTDIYDF…DTVNVASRLE (133 aa)) form the Guanylate cyclase domain. Positions 476 and 520 each coordinate Mg(2+).

Belongs to the adenylyl cyclase class-3 family. Mg(2+) serves as cofactor.

Its subcellular location is the cell membrane. It catalyses the reaction ATP = 3',5'-cyclic AMP + diphosphate. Functionally, plays essential roles in regulation of cellular metabolism by catalyzing the synthesis of a second messenger, cAMP. The chain is Adenylate cyclase 1 (cya1) from Rhizobium meliloti (strain 1021) (Ensifer meliloti).